A 415-amino-acid polypeptide reads, in one-letter code: MIQETRRLADEYEISEILGRGGFSVVRKGISRKSSSSSDKTDVAIKTLKRPFAPSNPPPLPPHARRNDQNSFAAAAFQTRKQVSISNVLLTNEILVMRKIVENVSPHPNVIDLYDVYEDENGVHLVLELCSGGELFDRIVKQERYSEVGAAAVVRQIAQGLAALHRSNIVHRDLKPENCLFLDNTVDSPLKIMDFGLSSVEEFTDPVVGLFGSIDYVSPEALSQGQVTSKSDMWALGVILYILLSGYPPFIAQSNRQKQQMIMAGEFSFYEKTWKGFLCQPKQLISSLLKVDPDKRPSAQELLDHPWVVGLSAREDQMDAEIVSRLQSFNARRKLRAAAIASVWTSSIFLRTKKLKSLLGSYDLKPDEIKNLSSHFKKICVKGDNATLSEFRLSCKRLIQLRLVSMSLRAEPARL.

A Protein kinase domain is found at 12 to 308 (YEISEILGRG…AQELLDHPWV (297 aa)). ATP contacts are provided by residues 18 to 26 (LGRGGFSVV) and Lys46. Catalysis depends on Asp173, which acts as the Proton acceptor. The interval 318–328 (MDAEIVSRLQS) is calmodulin-binding.

It belongs to the protein kinase superfamily. CAMK Ser/Thr protein kinase family. CaMK subfamily.

It carries out the reaction L-seryl-[protein] + ATP = O-phospho-L-seryl-[protein] + ADP + H(+). The catalysed reaction is L-threonyl-[protein] + ATP = O-phospho-L-threonyl-[protein] + ADP + H(+). Its function is as follows. May be involved in signal transduction processes. The polypeptide is Calcium/calmodulin-dependent serine/threonine-protein kinase (Malus domestica (Apple)).